The sequence spans 326 residues: Tagatose 1,6-diphosphate aldolase (326 aa).

This sequence belongs to the aldolase LacD family.

It carries out the reaction D-tagatofuranose 1,6-bisphosphate = D-glyceraldehyde 3-phosphate + dihydroxyacetone phosphate. It functions in the pathway carbohydrate metabolism; D-tagatose 6-phosphate degradation; D-glyceraldehyde 3-phosphate and glycerone phosphate from D-tagatose 6-phosphate: step 2/2. This is Tagatose 1,6-diphosphate aldolase from Staphylococcus aureus (strain MW2).